The chain runs to 417 residues: MDVKQNYEQAKKQYEKWGVNVEDALEKLKQIPISIHCWQGDDVTGFEVNQQELSGGIDVTGNYPGKATTPEELRDDLDKALSLIPGMHRVNLHAIYAETNGEAVERDEIEPKHFENWVKWAKENGLGLDFNPTLFSHPKADDGLTLAHPNKEIRDFWIRHTIASRKIAAYMGKELGTSALTNIWTPDGYKDIPSDRLTPRKRLEDSLNQIFEEEIDKEYNVDAVESKLFGIGSEAYVVGSHEFYMGYALKNNKLCLLDTGHYHPTEMVSNKISSMLLYSDELALHVSRPVRWDSDHVVILDDELREIGLEIVRNDALDKVRIGLDFFDASINRIAAWTIGTRNMIKSLLYALLTPNEHLKQLQEEGNFTDRLAIMEELKTYPFGAIWDYYCESMNVPVGESWLTEVKEYEKEVLSKR.

Mn(2+) contacts are provided by His261, Asp293, and Asp295.

It belongs to the rhamnose isomerase family. The cofactor is Mn(2+).

The protein localises to the cytoplasm. The enzyme catalyses L-rhamnopyranose = L-rhamnulose. The protein operates within carbohydrate degradation; L-rhamnose degradation; glycerone phosphate from L-rhamnose: step 1/3. Its function is as follows. Catalyzes the interconversion of L-rhamnose and L-rhamnulose. The chain is L-rhamnose isomerase from Oceanobacillus iheyensis (strain DSM 14371 / CIP 107618 / JCM 11309 / KCTC 3954 / HTE831).